The chain runs to 125 residues: Phosphoribosyl-AMP cyclohydrolase (125 aa).

Asp-74 provides a ligand contact to Mg(2+). Cys-75 contributes to the Zn(2+) binding site. 2 residues coordinate Mg(2+): Asp-76 and Asp-78. Positions 92 and 99 each coordinate Zn(2+).

This sequence belongs to the PRA-CH family. In terms of assembly, homodimer. Mg(2+) is required as a cofactor. Zn(2+) serves as cofactor.

It is found in the cytoplasm. It carries out the reaction 1-(5-phospho-beta-D-ribosyl)-5'-AMP + H2O = 1-(5-phospho-beta-D-ribosyl)-5-[(5-phospho-beta-D-ribosylamino)methylideneamino]imidazole-4-carboxamide. It participates in amino-acid biosynthesis; L-histidine biosynthesis; L-histidine from 5-phospho-alpha-D-ribose 1-diphosphate: step 3/9. Catalyzes the hydrolysis of the adenine ring of phosphoribosyl-AMP. This chain is Phosphoribosyl-AMP cyclohydrolase, found in Geobacter sulfurreducens (strain ATCC 51573 / DSM 12127 / PCA).